We begin with the raw amino-acid sequence, 106 residues long: Small ribosomal subunit protein uS10 (106 aa).

The protein belongs to the universal ribosomal protein uS10 family. Part of the 30S ribosomal subunit.

Involved in the binding of tRNA to the ribosomes. This chain is Small ribosomal subunit protein uS10, found in Hyphomonas neptunium (strain ATCC 15444).